Consider the following 63-residue polypeptide: 2-hydroxymuconate tautomerase (63 aa).

Catalysis depends on Pro-2, which acts as the Proton acceptor; via imino nitrogen.

The protein belongs to the 4-oxalocrotonate tautomerase family. In terms of assembly, homohexamer.

It catalyses the reaction (2Z,4E)-2-hydroxyhexa-2,4-dienedioate = (3E)-2-oxohex-3-enedioate. The protein operates within aromatic compound metabolism; salicylate degradation. Functionally, catalyzes the ketonization of 2-hydroxymuconate stereoselectively to yield 2-oxo-3-hexenedioate. In Stutzerimonas stutzeri (Pseudomonas stutzeri), this protein is 2-hydroxymuconate tautomerase (nahJ).